Consider the following 264-residue polypeptide: 3-methyl-2-oxobutanoate hydroxymethyltransferase (264 aa).

Mg(2+) is bound by residues D45 and D84. Residues 45-46, D84, and K112 contribute to the 3-methyl-2-oxobutanoate site; that span reads DS. Position 114 (E114) interacts with Mg(2+). E181 acts as the Proton acceptor in catalysis.

This sequence belongs to the PanB family. In terms of assembly, homodecamer; pentamer of dimers. Mg(2+) is required as a cofactor.

It localises to the cytoplasm. The catalysed reaction is 3-methyl-2-oxobutanoate + (6R)-5,10-methylene-5,6,7,8-tetrahydrofolate + H2O = 2-dehydropantoate + (6S)-5,6,7,8-tetrahydrofolate. Its pathway is cofactor biosynthesis; (R)-pantothenate biosynthesis; (R)-pantoate from 3-methyl-2-oxobutanoate: step 1/2. Its function is as follows. Catalyzes the reversible reaction in which hydroxymethyl group from 5,10-methylenetetrahydrofolate is transferred onto alpha-ketoisovalerate to form ketopantoate. This Shigella sonnei (strain Ss046) protein is 3-methyl-2-oxobutanoate hydroxymethyltransferase.